A 244-amino-acid chain; its full sequence is Putative lipoprotein LprA (244 aa).

The N-terminal stretch at 1-24 (MKHPPCSVVAAATAILAVVLAIGG) is a signal peptide. A lipid anchor (N-palmitoyl cysteine) is attached at Cys25. The S-diacylglycerol cysteine moiety is linked to residue Cys25.

It belongs to the LppX/LprAFG lipoprotein family.

Its subcellular location is the cell membrane. The protein is Putative lipoprotein LprA (lprA) of Mycobacterium bovis (strain ATCC BAA-935 / AF2122/97).